The sequence spans 95 residues: Mitochondrial import inner membrane translocase subunit Tim9 (95 aa).

A Twin CX3C motif motif is present at residues 35-59; that stretch reads CFTDCIRDFTTRDVKDSEEKCSLNC. Disulfide bonds link C35–C59 and C39–C55.

Belongs to the small Tim family. Heterohexamer; composed of 3 copies of Tim9 and 3 copies of Tim10, named soluble 70 kDa complex. The complex associates with the Tim22 component of the TIM22 complex. Interacts with multi-pass transmembrane proteins in transit.

The protein resides in the mitochondrion inner membrane. In terms of biological role, mitochondrial intermembrane chaperone that participates in the import and insertion of multi-pass transmembrane proteins into the mitochondrial inner membrane. May also be required for the transfer of beta-barrel precursors from the TOM complex to the sorting and assembly machinery (SAM complex) of the outer membrane. Acts as a chaperone-like protein that protects the hydrophobic precursors from aggregation and guide them through the mitochondrial intermembrane space. This is Mitochondrial import inner membrane translocase subunit Tim9 (Tim9a) from Drosophila melanogaster (Fruit fly).